Here is a 236-residue protein sequence, read N- to C-terminus: MATTHLDVCAVVPAAGFGRRMQTECPKQYLSIGNQTILEHSVHALLAHPRVKHVVIAISPGDSRFAQLPLANHPQITVVDGGEERADSVLAGLKAAGDAQWVLVHDAARPCLHQDDLARLLALSETSRTGGILAAPVRDTMKRAEPGKNAIAHTVDRNGLWHALTPQFFPRELLHDCLTRALNEGATITDEASALEYCGFHPQLVEGRADNIKVTRPEDLALAEFYLTRTIHQENT.

It belongs to the IspD/TarI cytidylyltransferase family. IspD subfamily. Homodimer.

It carries out the reaction 2-C-methyl-D-erythritol 4-phosphate + CTP + H(+) = 4-CDP-2-C-methyl-D-erythritol + diphosphate. The protein operates within isoprenoid biosynthesis; isopentenyl diphosphate biosynthesis via DXP pathway; isopentenyl diphosphate from 1-deoxy-D-xylulose 5-phosphate: step 2/6. Catalyzes the formation of 4-diphosphocytidyl-2-C-methyl-D-erythritol from CTP and 2-C-methyl-D-erythritol 4-phosphate (MEP). The chain is 2-C-methyl-D-erythritol 4-phosphate cytidylyltransferase from Escherichia coli O7:K1 (strain IAI39 / ExPEC).